The primary structure comprises 324 residues: o-succinylbenzoate synthase (324 aa).

Lysine 135 (proton donor) is an active-site residue. Positions 163, 192, and 215 each coordinate Mg(2+). Lysine 237 acts as the Proton acceptor in catalysis.

Belongs to the mandelate racemase/muconate lactonizing enzyme family. MenC type 1 subfamily. Requires a divalent metal cation as cofactor.

The catalysed reaction is (1R,6R)-6-hydroxy-2-succinyl-cyclohexa-2,4-diene-1-carboxylate = 2-succinylbenzoate + H2O. It participates in quinol/quinone metabolism; 1,4-dihydroxy-2-naphthoate biosynthesis; 1,4-dihydroxy-2-naphthoate from chorismate: step 4/7. Its pathway is quinol/quinone metabolism; menaquinone biosynthesis. Its function is as follows. Converts 2-succinyl-6-hydroxy-2,4-cyclohexadiene-1-carboxylate (SHCHC) to 2-succinylbenzoate (OSB). The chain is o-succinylbenzoate synthase from Aliivibrio salmonicida (strain LFI1238) (Vibrio salmonicida (strain LFI1238)).